Reading from the N-terminus, the 509-residue chain is Cardiolipin synthase 1 (509 aa).

A run of 3 helical transmembrane segments spans residues Pro4–Thr24, Tyr30–Ile50, and Leu59–Phe79. PLD phosphodiesterase domains lie at Val238–Tyr265 and Lys422–Ser449. Residues His243, Lys245, Asp250, His427, Lys429, and Asp434 contribute to the active site.

Belongs to the phospholipase D family. Cardiolipin synthase subfamily.

The protein localises to the cell membrane. It catalyses the reaction 2 a 1,2-diacyl-sn-glycero-3-phospho-(1'-sn-glycerol) = a cardiolipin + glycerol. In terms of biological role, catalyzes the reversible phosphatidyl group transfer from one phosphatidylglycerol molecule to another to form cardiolipin (CL) (diphosphatidylglycerol) and glycerol. The sequence is that of Cardiolipin synthase 1 (cls1) from Bacillus cereus (strain ATCC 14579 / DSM 31 / CCUG 7414 / JCM 2152 / NBRC 15305 / NCIMB 9373 / NCTC 2599 / NRRL B-3711).